Consider the following 834-residue polypeptide: Pentatricopeptide repeat-containing protein At4g39530 (834 aa).

PPR repeat units follow at residues 78-112 (DTYLSNILINLYSRAGGMVYARKVFEKMPERNLVS), 113-144 (WSTMVSACNHHGIYEESLVVFLEFWRTRKDSP), 145-181 (NEYILSSFIQACSGLDGRGRWMVFQLQSFLVKSGFDR), 182-212 (DVYVGTLLIDFYLKDGNIDYARLVFDALPEK), 213-247 (STVTWTTMISGCVKMGRSYVSLQLFYQLMEDNVVP), 248-282 (DGYILSTVLSACSILPFLEGGKQIHAHILRYGLEM), 283-313 (DASLMNVLIDSYVKCGRVIAAHKLFNGMPNK), 314-348 (NIISWTTLLSGYKQNALHKEAMELFTSMSKFGLKP), 349-383 (DMYACSSILTSCASLHALGFGTQVHAYTIKANLGN), 384-414 (DSYVTNSLIDMYAKCDCLTDARKVFDIFAAA), 415-452 (DVVLFNAMIEGYSRLGTQWELHEALNIFRDMRFRLIRP), 453-487 (SLLTFVSLLRASASLTSLGLSKQIHGLMFKYGLNL), 488-518 (DIFAGSALIDVYSNCYCLKDSRLVFDEMKVK), 519-553 (DLVIWNSMFAGYVQQSENEEALNLFLELQLSRERP), 554-588 (DEFTFANMVTAAGNLASVQLGQEFHCQLLKRGLEC), 589-619 (NPYITNALLDMYAKCGSPEDAHKAFDSAASR), 620-654 (DVVCWNSVISSYANHGEGKKALQMLEKMMSEGIEP), 655-689 (NYITFVGVLSACSHAGLVEDGLKQFELMLRFGIEP), and 690-720 (ETEHYVCMVSLLGRAGRLNKARELIEKMPTK). Positions 725–800 (VWRSLLSGCA…EPGRSWIGIN (76 aa)) are type E motif. The interval 801 to 831 (KEVHIFLSKDKSHCKANQIYEVLDDLLVQIR) is type E(+) motif.

It belongs to the PPR family. PCMP-E subfamily.

This is Pentatricopeptide repeat-containing protein At4g39530 (PCMP-E52) from Arabidopsis thaliana (Mouse-ear cress).